Reading from the N-terminus, the 61-residue chain is Large ribosomal subunit protein eL37 (61 aa).

Zn(2+)-binding residues include cysteine 18, cysteine 21, cysteine 33, and cysteine 36. Residues 18–36 (CRRCGRNAYNPTKKYCASC) form a C4-type zinc finger.

Belongs to the eukaryotic ribosomal protein eL37 family. Requires Zn(2+) as cofactor.

Functionally, binds to the 23S rRNA. This Methanosphaera stadtmanae (strain ATCC 43021 / DSM 3091 / JCM 11832 / MCB-3) protein is Large ribosomal subunit protein eL37.